We begin with the raw amino-acid sequence, 294 residues long: 4-hydroxy-tetrahydrodipicolinate synthase (294 aa).

Serine 47 contributes to the pyruvate binding site. Residue tyrosine 135 is the Proton donor/acceptor of the active site. Lysine 163 functions as the Schiff-base intermediate with substrate in the catalytic mechanism. Isoleucine 205 lines the pyruvate pocket.

This sequence belongs to the DapA family. Homotetramer; dimer of dimers.

Its subcellular location is the cytoplasm. The catalysed reaction is L-aspartate 4-semialdehyde + pyruvate = (2S,4S)-4-hydroxy-2,3,4,5-tetrahydrodipicolinate + H2O + H(+). The protein operates within amino-acid biosynthesis; L-lysine biosynthesis via DAP pathway; (S)-tetrahydrodipicolinate from L-aspartate: step 3/4. Functionally, catalyzes the condensation of (S)-aspartate-beta-semialdehyde [(S)-ASA] and pyruvate to 4-hydroxy-tetrahydrodipicolinate (HTPA). In Ralstonia nicotianae (strain ATCC BAA-1114 / GMI1000) (Ralstonia solanacearum), this protein is 4-hydroxy-tetrahydrodipicolinate synthase.